Reading from the N-terminus, the 552-residue chain is 2-methyl-1,2-propanediol dehydrogenase (552 aa).

The protein belongs to the GMC oxidoreductase family. FAD serves as cofactor.

The protein localises to the cytoplasm. The enzyme catalyses 2-methylpropane-1,2-diol + NAD(+) = 2-hydroxy-2-methylpropanal + NADH + H(+). Involved in the degradation of methyl tert-butyl ether (MTBE). Catalyzes the conversion of 2-methyl 1,2-propanediol (2-M1,2-PD) to hydroxyisobutyraldehyde. The chain is 2-methyl-1,2-propanediol dehydrogenase from Mycolicibacterium austroafricanum (Mycobacterium austroafricanum).